We begin with the raw amino-acid sequence, 293 residues long: 4-diphosphocytidyl-2-C-methyl-D-erythritol kinase (293 aa).

The active site involves Lys16. 99–109 (PMGAGLGGGSS) provides a ligand contact to ATP. The active site involves Asp141.

It belongs to the GHMP kinase family. IspE subfamily.

The enzyme catalyses 4-CDP-2-C-methyl-D-erythritol + ATP = 4-CDP-2-C-methyl-D-erythritol 2-phosphate + ADP + H(+). Its pathway is isoprenoid biosynthesis; isopentenyl diphosphate biosynthesis via DXP pathway; isopentenyl diphosphate from 1-deoxy-D-xylulose 5-phosphate: step 3/6. Catalyzes the phosphorylation of the position 2 hydroxy group of 4-diphosphocytidyl-2C-methyl-D-erythritol. The chain is 4-diphosphocytidyl-2-C-methyl-D-erythritol kinase from Paraburkholderia phymatum (strain DSM 17167 / CIP 108236 / LMG 21445 / STM815) (Burkholderia phymatum).